Consider the following 336-residue polypeptide: Atypical chemokine receptor 1 (336 aa).

At 1 to 63 (MGNCLHQAEL…CSLLNDSSLP (63 aa)) the chain is on the extracellular side. N-linked (GlcNAc...) asparagine glycosylation is found at asparagine 16, asparagine 27, asparagine 33, and asparagine 58. 2 disulfides stabilise this stretch: cysteine 51–cysteine 276 and cysteine 129–cysteine 195. The helical transmembrane segment at 64 to 84 (FFILASDLGILASSTVLFMLF) threads the bilayer. Topologically, residues 85-95 (RPLFRWQLCPG) are cytoplasmic. A helical membrane pass occupies residues 96 to 116 (WPVLAQLAVGSALFSIVVPIL). Over 117–129 (APGLGNTHSSALC) the chain is Extracellular. A helical transmembrane segment spans residues 130–153 (SLGYCVWYGSAFAQALLLGCHASL). Topologically, residues 154–166 (GPKLGAGQVPGLT) are cytoplasmic. Residues 167–187 (LGLPVGLWGATALLTLPITLA) traverse the membrane as a helical segment. Topologically, residues 188-207 (SGASDGLCTPIYSTELEALQ) are extracellular. Residues 208-228 (ATHAVACFAIFVLLPLGLFGA) form a helical membrane-spanning segment. The Cytoplasmic segment spans residues 229–244 (KGLKKALGMGPGPWMN). Residues 245 to 265 (ILWVWFIFWWPHGLVLGLDFL) traverse the membrane as a helical segment. At 266–287 (VGSKLSLLPTCLAQQVLDLLLN) the chain is on the extracellular side. The chain crosses the membrane as a helical span at residues 288–308 (LAEALAIVHCVATPLLLALFC). Over 309-336 (HQTTRTLLPSLPLPERWSSPVDTLGSKS) the chain is Cytoplasmic.

The protein belongs to the G-protein coupled receptor 1 family. Atypical chemokine receptor subfamily.

It is found in the early endosome. Its subcellular location is the recycling endosome. The protein localises to the membrane. In terms of biological role, atypical chemokine receptor that controls chemokine levels and localization via high-affinity chemokine binding that is uncoupled from classic ligand-driven signal transduction cascades, resulting instead in chemokine sequestration, degradation, or transcytosis. Also known as interceptor (internalizing receptor) or chemokine-scavenging receptor or chemokine decoy receptor. Has a promiscuous chemokine-binding profile, interacting with inflammatory chemokines of both the CXC and the CC subfamilies but not with homeostatic chemokines. Acts as a receptor for chemokines including CCL2, CCL5, CCL7, CCL11, CCL13, CCL14, CCL17, CXCL5, CXCL6, IL8/CXCL8, CXCL11, GRO, RANTES, MCP-1 and TARC. May regulate chemokine bioavailability and, consequently, leukocyte recruitment through two distinct mechanisms: when expressed in endothelial cells, it sustains the abluminal to luminal transcytosis of tissue-derived chemokines and their subsequent presentation to circulating leukocytes; when expressed in erythrocytes, serves as blood reservoir of cognate chemokines but also as a chemokine sink, buffering potential surges in plasma chemokine levels. The sequence is that of Atypical chemokine receptor 1 (ACKR1) from Saimiri boliviensis boliviensis (Bolivian squirrel monkey).